Here is a 254-residue protein sequence, read N- to C-terminus: Probable phosphatase Sbal223_2880 (254 aa).

The Zn(2+) site is built by His-8, His-10, His-16, His-41, Glu-74, His-102, His-132, Asp-193, and His-195.

Belongs to the PHP family. Zn(2+) serves as cofactor.

The protein is Probable phosphatase Sbal223_2880 of Shewanella baltica (strain OS223).